Reading from the N-terminus, the 448-residue chain is Multiple inositol polyphosphate phosphatase 1 (448 aa).

An N-terminal signal peptide occupies residues 1–19 (MAPRRAACLLPLLVAVASA). The active site involves histidine 69. 4 N-linked (GlcNAc...) asparagine glycosylation sites follow: asparagine 203, asparagine 257, asparagine 409, and asparagine 441. Residues 445–448 (ADEL) carry the Prevents secretion from ER motif.

It belongs to the histidine acid phosphatase family. MINPP1 subfamily. Post-translationally, N-glycosylated. As to expression, present in growth plate chondrocytes but not detectable in articular chondrocytes (at protein level). Spatially restricted to chondrocytes in the lower portion of the proliferative zone and the upper portion of the hypertrophic zone in the growth plate of long bones (at protein level). Weakly expressed in kidney, liver, lung, skin and spleen, and not detected in brain, heart and muscle.

Its subcellular location is the endoplasmic reticulum lumen. The protein resides in the secreted. The protein localises to the cell membrane. It carries out the reaction 1D-myo-inositol hexakisphosphate + H2O = 1D-myo-inositol 1,2,4,5,6-pentakisphosphate + phosphate. The enzyme catalyses 1D-myo-inositol 1,2,4,5,6-pentakisphosphate + H2O = 1D-myo-inositol 1,2,5,6-tetrakisphosphate + phosphate. The catalysed reaction is 1D-myo-inositol 1,2,5,6-tetrakisphosphate + H2O = 1D-myo-inositol 1,2,6-trisphosphate + phosphate. It catalyses the reaction 1D-myo-inositol 1,2,6-trisphosphate + H2O = 1D-myo-inositol 1,2-bisphosphate + phosphate. It carries out the reaction 1D-myo-inositol 1,2-bisphosphate + H2O = 1D-myo-inositol 2-phosphate + phosphate. The enzyme catalyses 1D-myo-inositol hexakisphosphate + H2O = 1D-myo-inositol 1,2,3,5,6-pentakisphosphate + phosphate. The catalysed reaction is 1D-myo-inositol 1,2,3,5,6-pentakisphosphate + H2O = 1D-myo-inositol 1,2,3,6-tetrakisphosphate + phosphate. It catalyses the reaction 1D-myo-inositol 1,2,3,6-tetrakisphosphate + H2O = 1D-myo-inositol 1,2,3-trisphosphate + phosphate. It carries out the reaction 1D-myo-inositol 1,2,3-trisphosphate + H2O = 1D-myo-inositol 2,3-bisphosphate + phosphate. The enzyme catalyses 1D-myo-inositol 2,3-bisphosphate + H2O = 1D-myo-inositol 2-phosphate + phosphate. The catalysed reaction is 1D-myo-inositol 1,3,4,5,6-pentakisphosphate + H2O = 1D-myo-inositol 1,4,5,6-tetrakisphosphate + phosphate. It catalyses the reaction 1D-myo-inositol 1,4,5,6-tetrakisphosphate + H2O = 1D-myo-inositol 1,4,5-trisphosphate + phosphate. It carries out the reaction (2R)-2,3-bisphosphoglycerate + H2O = (2R)-2-phosphoglycerate + phosphate. Multiple inositol polyphosphate phosphatase that hydrolyzes 1D-myo-inositol 1,3,4,5,6-pentakisphosphate (InsP5[2OH]) and 1D-myo-inositol hexakisphosphate (InsP6) to a range of less phosphorylated inositol phosphates. This regulates the availability of these various small molecule second messengers and metal chelators which control many aspects of cell physiology. Has a weak in vitro activity towards 1D-myo-inositol 1,4,5-trisphosphate which is unlikely to be physiologically relevant. By regulating intracellular inositol polyphosphates pools, which act as metal chelators, it may control the availability of intracellular calcium and iron, which are important for proper neuronal development and homeostasis. May have a dual substrate specificity, and function as a 2,3-bisphosphoglycerate 3-phosphatase hydrolyzing 2,3-bisphosphoglycerate to 2-phosphoglycerate. 2,3-bisphosphoglycerate (BPG) is formed as part of the Rapoport-Luebering glycolytic bypass and is a regulator of systemic oxygen homeostasis as the major allosteric effector of hemoglobin. The chain is Multiple inositol polyphosphate phosphatase 1 (MINPP1) from Gallus gallus (Chicken).